Consider the following 66-residue polypeptide: MKPSDMRQLKAEDFQKEIDSRKKELMELRFQAAMGNLAQPHRVTQLRREVAQLNTIRGEQRAGEQK.

Belongs to the universal ribosomal protein uL29 family.

This is Large ribosomal subunit protein uL29 from Deinococcus deserti (strain DSM 17065 / CIP 109153 / LMG 22923 / VCD115).